The following is a 448-amino-acid chain: Probable metal transport system membrane protein CPn_0347/CP_0413/CPj0347/CpB0354 (448 aa).

Helical transmembrane passes span 15–35 (FLAV…LLIS), 47–67 (ASYP…SLQA), 69–89 (IFWI…IIVF), 100–120 (SALC…ASYV), 144–164 (FLEA…LWWW), 193–213 (LIFI…VLIS), 233–253 (ILIL…YISV), and 270–290 (LPTG…CLLF).

The protein belongs to the ABC-3 integral membrane protein family.

The protein resides in the cell inner membrane. In terms of biological role, part of an ATP-driven transport system CPn_0346/CPn_0347/CPn_0348/CPn_0349 for a metal. The polypeptide is Probable metal transport system membrane protein CPn_0347/CP_0413/CPj0347/CpB0354 (Chlamydia pneumoniae (Chlamydophila pneumoniae)).